Reading from the N-terminus, the 229-residue chain is Cytidylate kinase (229 aa).

ATP is bound at residue 12 to 20 (GPSGSGKGT).

The protein belongs to the cytidylate kinase family. Type 1 subfamily.

Its subcellular location is the cytoplasm. The enzyme catalyses CMP + ATP = CDP + ADP. It catalyses the reaction dCMP + ATP = dCDP + ADP. The polypeptide is Cytidylate kinase (Pseudomonas fluorescens (strain Pf0-1)).